The chain runs to 283 residues: Thymidylate synthase (283 aa).

R22 contributes to the dUMP binding site. The active-site Nucleophile is C160. DUMP is bound by residues 180-183 (RSCD), N191, and 221-223 (HIY). D183 lines the (6R)-5,10-methylene-5,6,7,8-tetrahydrofolate pocket. S282 lines the (6R)-5,10-methylene-5,6,7,8-tetrahydrofolate pocket.

It belongs to the thymidylate synthase family. Bacterial-type ThyA subfamily. Homodimer.

It is found in the cytoplasm. It catalyses the reaction dUMP + (6R)-5,10-methylene-5,6,7,8-tetrahydrofolate = 7,8-dihydrofolate + dTMP. It functions in the pathway pyrimidine metabolism; dTTP biosynthesis. Catalyzes the reductive methylation of 2'-deoxyuridine-5'-monophosphate (dUMP) to 2'-deoxythymidine-5'-monophosphate (dTMP) while utilizing 5,10-methylenetetrahydrofolate (mTHF) as the methyl donor and reductant in the reaction, yielding dihydrofolate (DHF) as a by-product. This enzymatic reaction provides an intracellular de novo source of dTMP, an essential precursor for DNA biosynthesis. The sequence is that of Thymidylate synthase from Vibrio cholerae serotype O1 (strain ATCC 39315 / El Tor Inaba N16961).